The primary structure comprises 357 residues: DNA primase small subunit PriS (357 aa).

Catalysis depends on residues D105, D107, and D259.

It belongs to the eukaryotic-type primase small subunit family. In terms of assembly, heterodimer of a small subunit (PriS) and a large subunit (PriL). Requires Mg(2+) as cofactor. Mn(2+) is required as a cofactor.

In terms of biological role, catalytic subunit of DNA primase, an RNA polymerase that catalyzes the synthesis of short RNA molecules used as primers for DNA polymerase during DNA replication. The small subunit contains the primase catalytic core and has DNA synthesis activity on its own. Binding to the large subunit stabilizes and modulates the activity, increasing the rate of DNA synthesis while decreasing the length of the DNA fragments, and conferring RNA synthesis capability. The DNA polymerase activity may enable DNA primase to also catalyze primer extension after primer synthesis. May also play a role in DNA repair. This Methanococcus maripaludis (strain DSM 14266 / JCM 13030 / NBRC 101832 / S2 / LL) protein is DNA primase small subunit PriS.